We begin with the raw amino-acid sequence, 458 residues long: Chromosomal replication initiator protein DnaA (458 aa).

Residues 1 to 79 (MSLAIWQECL…ENPNHSVKIR (79 aa)) form a domain I, interacts with DnaA modulators region. Positions 79-120 (RLMVGNVSSVEKKPAKQIPTQAPLTNQPWEGESKAHRVPHKS) are domain II. The disordered stretch occupies residues 92–114 (PAKQIPTQAPLTNQPWEGESKAH). Residues 96–106 (IPTQAPLTNQP) show a composition bias toward polar residues. Residues 121-338 (NLIKKYTFDN…GAIANISAKA (218 aa)) are domain III, AAA+ region. Residues G165, G167, K168, and T169 each coordinate ATP. The interval 339–458 (QFTGQGITIS…YKILIRTLSM (120 aa)) is domain IV, binds dsDNA.

This sequence belongs to the DnaA family. In terms of assembly, oligomerizes as a right-handed, spiral filament on DNA at oriC.

The protein localises to the cytoplasm. In terms of biological role, plays an essential role in the initiation and regulation of chromosomal replication. ATP-DnaA binds to the origin of replication (oriC) to initiate formation of the DNA replication initiation complex once per cell cycle. Binds the DnaA box (a 9 base pair repeat at the origin) and separates the double-stranded (ds)DNA. Forms a right-handed helical filament on oriC DNA; dsDNA binds to the exterior of the filament while single-stranded (ss)DNA is stabiized in the filament's interior. The ATP-DnaA-oriC complex binds and stabilizes one strand of the AT-rich DNA unwinding element (DUE), permitting loading of DNA polymerase. After initiation quickly degrades to an ADP-DnaA complex that is not apt for DNA replication. Binds acidic phospholipids. The protein is Chromosomal replication initiator protein DnaA of Psychromonas ingrahamii (strain DSM 17664 / CCUG 51855 / 37).